Reading from the N-terminus, the 634-residue chain is E3 ubiquitin/ISG15 ligase TRIM25 (634 aa).

The segment at 13–54 (CSVCLELFKEPVTTPCGHNFCMSCLDETWVVQGPPYRCPQCR) adopts an RING-type zinc-finger fold. T90 is subject to Phosphothreonine. S99 is modified (phosphoserine). Residue K116 forms a Glycyl lysine isopeptide (Lys-Gly) (interchain with G-Cter in ISG15) linkage. A coiled-coil region spans residues 215–305 (ATKALEDVRS…LIMDKGDEFE (91 aa)). Residue K272 is modified to N6-acetyllysine. At Y277 the chain carries Phosphotyrosine. Residues 353–437 (KLQKKSEEHN…APKASAAQPD (85 aa)) are disordered. Polar residues predominate over residues 363-376 (GSGNKGDQTQSTFK). In terms of domain architecture, B30.2/SPRY spans 444–634 (KVLENFLTKS…AGTTLSICSK (191 aa)). Position 572 is an N6-acetyllysine (K572).

In terms of assembly, forms homodimers. Interacts (via SPRY domain) with RIGI (via CARD domain). Interacts with ZFHX3. Interacts with NLRP12; this interaction reduces the E3 ubiquitin ligase TRIM25-mediated 'Lys-63'-linked RIGI activation. Interacts with the KHDC3L/FILIA-OOEP/FLOPED scaffold complex and BLM at DNA replication forks. Interacts with RTN3; this interaction prevents RIGI ubiquitination. Interacts with YWHAE. In terms of processing, auto-ISGylated. As to expression, ubiquitous.

The protein resides in the cytoplasm. Its subcellular location is the stress granule. The protein localises to the nucleus. It catalyses the reaction S-ubiquitinyl-[E2 ubiquitin-conjugating enzyme]-L-cysteine + [acceptor protein]-L-lysine = [E2 ubiquitin-conjugating enzyme]-L-cysteine + N(6)-ubiquitinyl-[acceptor protein]-L-lysine.. It carries out the reaction ATP + [ISG15] + [protein]-lysine = AMP + diphosphate + [protein]-N-ISGyllysine.. It participates in protein modification; protein ubiquitination. In terms of biological role, functions as a ubiquitin E3 ligase and as an ISG15 E3 ligase. Involved in innate immune defense against viruses by mediating ubiquitination of RIGI and IFIH1. Mediates 'Lys-63'-linked polyubiquitination of the RIGI N-terminal CARD-like region and may play a role in signal transduction that leads to the production of interferons in response to viral infection. Mediates 'Lys-63'-linked polyubiquitination of IFIH1. Promotes ISGylation of 14-3-3 sigma (SFN), an adapter protein implicated in the regulation of a large spectrum signaling pathway. Mediates estrogen action in various target organs. Mediates the ubiquitination and subsequent proteasomal degradation of ZFHX3. Plays a role in promoting the restart of stalled replication forks via interaction with the KHDC3L-OOEP scaffold and subsequent ubiquitination of BLM, resulting in the recruitment and retainment of BLM at DNA replication forks. Plays an essential role in the antiviral activity of ZAP/ZC3HAV1; an antiviral protein which inhibits the replication of certain viruses. Mechanistically, mediates 'Lys-63'-linked polyubiquitination of ZAP/ZC3HAV1 that is required for its optimal binding to target mRNA. Also mediates the ubiquitination of various substrates implicated in stress granule formation, nonsense-mediated mRNA decay, nucleoside synthesis and mRNA translation and stability. This Mus musculus (Mouse) protein is E3 ubiquitin/ISG15 ligase TRIM25 (Trim25).